The following is a 277-amino-acid chain: Myelin proteolipid protein (277 aa).

The Cytoplasmic segment spans residues 1–10 (MGLLECCARC). S-palmitoyl cysteine attachment occurs at residues C6, C7, and C10. Residues 11–36 (LVGAPFASLVATGLCFFGVALFCGCG) form a helical membrane-spanning segment. Residues 37 to 59 (HEALTGTEKLIETYFSKNYQDYE) lie on the Extracellular side of the membrane. A helical membrane pass occupies residues 60–88 (YLINVIHAFQYVIYGTASFFFLYGALLLA). Topologically, residues 89–151 (EGFYTTGAVR…LGKWLGHPDK (63 aa)) are cytoplasmic. C109 carries S-palmitoyl cysteine lipidation. Position 114 is a phosphoserine (S114). 2 positions are modified to phosphothreonine: T116 and T118. C141 carries the S-palmitoyl cysteine lipid modification. Residues 152–178 (FVGITYALTVVWLLVFACSAVPVYIYF) form a helical membrane-spanning segment. Topologically, residues 179–238 (NTWTTCQSIAFPSKTSASIGSLCADARMYGVLPWNAFPGKVCGSNLLSICKTAEFQMTFH) are extracellular. Disulfide bonds link C184-C228 and C201-C220. A lipid anchor (O-palmitoyl serine) is attached at S199. A helical membrane pass occupies residues 239-268 (LFIAAFVGAAATLISLLTFMIAATYNFAVL). Over 269–277 (KLMGRGTKF) the chain is Cytoplasmic.

It belongs to the myelin proteolipid protein family.

The protein localises to the cell membrane. It is found in the myelin membrane. This is the major myelin protein from the central nervous system. It plays an important role in the formation or maintenance of the multilamellar structure of myelin. The chain is Myelin proteolipid protein (PLP1) from Macaca fascicularis (Crab-eating macaque).